Consider the following 207-residue polypeptide: Small ribosomal subunit protein uS4 (207 aa).

The segment at 35-54 (RPKPPGPQLGRPRRLSDRGQ) is disordered. Residues 97–163 (RRLDNVLFRL…AYFKTLAENI (67 aa)) enclose the S4 RNA-binding domain.

This sequence belongs to the universal ribosomal protein uS4 family. As to quaternary structure, part of the 30S ribosomal subunit. Contacts protein S5. The interaction surface between S4 and S5 is involved in control of translational fidelity.

In terms of biological role, one of the primary rRNA binding proteins, it binds directly to 16S rRNA where it nucleates assembly of the body of the 30S subunit. Functionally, with S5 and S12 plays an important role in translational accuracy. The sequence is that of Small ribosomal subunit protein uS4 from Dehalococcoides mccartyi (strain CBDB1).